The sequence spans 69 residues: DNA gyrase inhibitor YacG (69 aa).

Zn(2+)-binding residues include cysteine 7, cysteine 10, cysteine 26, and cysteine 30.

The protein belongs to the DNA gyrase inhibitor YacG family. As to quaternary structure, interacts with GyrB. It depends on Zn(2+) as a cofactor.

Inhibits all the catalytic activities of DNA gyrase by preventing its interaction with DNA. Acts by binding directly to the C-terminal domain of GyrB, which probably disrupts DNA binding by the gyrase. In Shewanella baltica (strain OS223), this protein is DNA gyrase inhibitor YacG.